Consider the following 247-residue polypeptide: ATP synthase subunit a, chloroplastic (247 aa).

The next 5 membrane-spanning stretches (helical) occupy residues 38–58, 95–115, 134–154, 199–219, and 220–240; these read QVLI…IIAV, VPFI…GALL, INTT…AGLT, LVVV…VMFL, and GLFT…AYIG.

It belongs to the ATPase A chain family. As to quaternary structure, F-type ATPases have 2 components, CF(1) - the catalytic core - and CF(0) - the membrane proton channel. CF(1) has five subunits: alpha(3), beta(3), gamma(1), delta(1), epsilon(1). CF(0) has four main subunits: a, b, b' and c.

The protein resides in the plastid. The protein localises to the chloroplast thylakoid membrane. In terms of biological role, key component of the proton channel; it plays a direct role in the translocation of protons across the membrane. This chain is ATP synthase subunit a, chloroplastic, found in Ranunculus macranthus (Large buttercup).